The primary structure comprises 630 residues: Sodium-dependent serotonin transporter (630 aa).

Topologically, residues 1 to 87 are cytoplasmic; the sequence is METTPLNSQK…ERETWGKKMD (87 aa). The disordered stretch occupies residues 23–60; sequence ENGVLQKGVPTTADRAEPSQISNGYSAVPSTSAGDEAS. Positions 41 to 55 are enriched in polar residues; it reads SQISNGYSAVPSTSA. Tyrosine 47 bears the Phosphotyrosine mark. A helical membrane pass occupies residues 88-112; that stretch reads FLLSVIGYAVDLGNIWRFPYICYQN. Glycine 94, alanine 96, valine 97, aspartate 98, and asparagine 101 together coordinate Na(+). Aspartate 98 contacts serotonin. The Extracellular portion of the chain corresponds to 113-115; it reads GGG. The chain crosses the membrane as a helical span at residues 116 to 135; sequence AFLLPYTIMAIFGGIPLFYM. Residues 136–160 are Cytoplasmic-facing; it reads ELALGQYHRNGCISIWRKICPIFKG. Position 142 is a phosphotyrosine (tyrosine 142). The chain crosses the membrane as a helical span at residues 161–186; that stretch reads IGYAICIIAFYIASYYNTIIAWALYY. Residues 187-252 are Extracellular-facing; that stretch reads LISSLTDRLP…KGLQDLGTIS (66 aa). A disulfide bridge links cysteine 200 with cysteine 209. N-linked (GlcNAc...) asparagine glycosylation is found at asparagine 208 and asparagine 217. Residues 253-271 form a helical membrane-spanning segment; the sequence is WQLTLCIVLIFTVIYFSIW. Topologically, residues 272–277 are cytoplasmic; it reads KGVKTS. At threonine 276 the chain carries Phosphothreonine. Residues 278 to 297 traverse the membrane as a helical segment; sequence GKVVWVTATFPYIVLSVLLV. The Extracellular segment spans residues 298-324; the sequence is RGATLPGAWRGVVFYLKPNWQKLLETG. Residues 325 to 347 traverse the membrane as a helical segment; the sequence is VWVDAAAQIFFSLGPGFGVLLAF. Serine 336 contributes to the Na(+) binding site. At 348-360 the chain is on the cytoplasmic side; it reads ASYNKFNNNCYQD. The chain crosses the membrane as a helical span at residues 361 to 380; the sequence is ALVTSVVNCMTSFVSGFVIF. Asparagine 368 is a binding site for Na(+). At 381–421 the chain is on the extracellular side; sequence TVLGYMAEMRNEDVSEVAKDAGPSLLFITYAEAIANMPAST. The chain crosses the membrane as a helical span at residues 422–443; sequence FFAIIFFLMLITLGLDSTFAGL. Na(+) contacts are provided by leucine 434, aspartate 437, and serine 438. Threonine 439 lines the serotonin pocket. Residues 444–463 lie on the Cytoplasmic side of the membrane; it reads EGVITAVLDEFPHIWAKRRE. Residues 464-483 form a helical membrane-spanning segment; that stretch reads WFVLIVVITCVLGSLLTLTS. At 484–494 the chain is on the extracellular side; that stretch reads GGAYVVTLLEE. Residues glutamate 494 and tyrosine 495 each contribute to the serotonin site. A helical transmembrane segment spans residues 495 to 516; the sequence is YATGPAVLTVALIEAVAVSWFY. The Cytoplasmic portion of the chain corresponds to 517-538; it reads GITQFCSDVKEMLGFSPGWFWR. A helical transmembrane segment spans residues 539-558; the sequence is ICWVAISPLFLLFIICSFLM. Residues phenylalanine 556 and serine 559 each contribute to the serotonin site. The Extracellular portion of the chain corresponds to 559 to 574; sequence SPPQLRLFQYNYPHWS. A helical transmembrane segment spans residues 575–595; it reads IVLGYCIGMSSVICIPTYIIY. The Cytoplasmic segment spans residues 596–630; that stretch reads RLISTPGTLKERIIKSITPETPTEIPCGDIRMNAV. The interval 616-624 is interaction with RAB4A; it reads TPTEIPCGD.

The protein belongs to the sodium:neurotransmitter symporter (SNF) (TC 2.A.22) family. SLC6A4 subfamily. As to quaternary structure, monomer or homooligomer. Interacts with TGFB1I1. Interacts with SEC23A, SEC24C and PATJ. Interacts with NOS1; the interaction may diminish the cell surface localization of SERT in the brain and, correspondingly, reduce serotonin reuptake. Interacts (via C-terminus) with SCAMP2; the interaction is direct and retains transporter molecules intracellularly. Interacts with filamentous actin and STX1A. Interacts (via the N-terminus) with STX1A (via the H3 domain); this interaction regulates SLC4A6 channel conductance. Interacts with ITGAV:ITGB3. Interacts (via C-terminus) with ITGB3; this interaction regulates SLC6A4 trafficking. Phosphorylation at Thr-276 increases 5-HT uptake and is required for cGMP-mediated SERT regulation. Expressed in the intestinal crypt epithelial cells and myenteric neurons of the small intestine (at protein level). Expressed in the brain.

The protein resides in the cell membrane. It is found in the endomembrane system. The protein localises to the endosome membrane. Its subcellular location is the synapse. It localises to the cell junction. The protein resides in the focal adhesion. It is found in the cell projection. The protein localises to the neuron projection. It carries out the reaction serotonin(out) + K(+)(in) + Na(+)(out) + H(+)(in) = serotonin(in) + K(+)(out) + Na(+)(in) + H(+)(out). Functionally, serotonin transporter that cotransports serotonin with one Na(+) ion in exchange for one K(+) ion and possibly one proton in an overall electroneutral transport cycle. Transports serotonin across the plasma membrane from the extracellular compartment to the cytosol thus limiting serotonin intercellular signaling. Essential for serotonin homeostasis in the central nervous system. In the developing somatosensory cortex, acts in glutamatergic neurons to control serotonin uptake and its trophic functions accounting for proper spatial organization of cortical neurons and elaboration of sensory circuits. In the mature cortex, acts primarily in brainstem raphe neurons to mediate serotonin uptake from the synaptic cleft back into the pre-synaptic terminal thus terminating serotonin signaling at the synapse. Modulates mucosal serotonin levels in the gastrointestinal tract through uptake and clearance of serotonin in enterocytes. Required for enteric neurogenesis and gastrointestinal reflexes. Regulates blood serotonin levels by ensuring rapid high affinity uptake of serotonin from plasma to platelets, where it is further stored in dense granules via vesicular monoamine transporters and then released upon stimulation. Mechanistically, the transport cycle starts with an outward-open conformation having Na1(+) and Cl(-) sites occupied. The binding of a second extracellular Na2(+) ion and serotonin substrate leads to structural changes to outward-occluded to inward-occluded to inward-open, where the Na2(+) ion and serotonin are released into the cytosol. Binding of intracellular K(+) ion induces conformational transitions to inward-occluded to outward-open and completes the cycle by releasing K(+) possibly together with a proton bound to Asp-98 into the extracellular compartment. Na1(+) and Cl(-) ions remain bound throughout the transport cycle. Additionally, displays serotonin-induced channel-like conductance for monovalent cations, mainly Na(+) ions. The channel activity is uncoupled from the transport cycle and may contribute to the membrane resting potential or excitability. This is Sodium-dependent serotonin transporter (Slc6a4) from Rattus norvegicus (Rat).